Reading from the N-terminus, the 207-residue chain is MEADSTTINVTETPKERKGKAPLLAAPPASSGVKRVLQKAPKGGYKRGLAVFDVVLRLAGIATALGAAIAMGSTDQTLPFFTQFFQFKAEFDDLPAFTFFVIANAITAAYLALTIPISIVCIIRPHLVAPRVLLIFLDTVMVALTTAAAGGTASIVYLAHNGNSDANWPAICQQFNDXCQKVSGAVVASFLTVVVLMLLIVLSAFAL.

Positions Met-1 to Glu-12 are enriched in polar residues. Positions Met-1–Lys-20 are disordered. The Cytoplasmic portion of the chain corresponds to Met-1 to Gly-48. Residues Leu-49–Ile-69 traverse the membrane as a helical segment. The Extracellular portion of the chain corresponds to Ala-70–Thr-98. A helical transmembrane segment spans residues Phe-99–Ile-119. The Cytoplasmic segment spans residues Val-120 to Arg-131. A helical transmembrane segment spans residues Val-132–Thr-152. At Ala-153 to Gly-184 the chain is on the extracellular side. Residues Ala-185–Phe-205 form a helical membrane-spanning segment. The Cytoplasmic portion of the chain corresponds to Ala-206–Leu-207.

The protein belongs to the Casparian strip membrane proteins (CASP) family. Homodimer and heterodimers.

The protein resides in the cell membrane. Regulates membrane-cell wall junctions and localized cell wall deposition. Required for establishment of the Casparian strip membrane domain (CSD) and the subsequent formation of Casparian strips, a cell wall modification of the root endodermis that determines an apoplastic barrier between the intraorganismal apoplasm and the extraorganismal apoplasm and prevents lateral diffusion. This is Casparian strip membrane protein 1 from Cynara cardunculus var. scolymus (Globe artichoke).